Consider the following 236-residue polypeptide: CD81 antigen (236 aa).

Topologically, residues 1–12 are cytoplasmic; that stretch reads MGVEGCTKCIKY. Residues 13-33 traverse the membrane as a helical segment; it reads LLFVFNFVFWLAGGVILGVAL. The Extracellular portion of the chain corresponds to 34–63; the sequence is WLRHDPQTTSLLYLELGNKPAPNTFYVGIY. A helical transmembrane segment spans residues 64–84; it reads ILIAVGAVMMFVGFLGCYGAI. Residues 85-89 are Cytoplasmic-facing; sequence QESQC. Residues 90–112 form a helical membrane-spanning segment; it reads LLGTFFTCLVILFACEVAAGIWG. Residues 113 to 201 are Extracellular-facing; that stretch reads FVNKDQIAKD…QKIDELFSGK (89 aa). 2 cysteine pairs are disulfide-bonded: C156-C190 and C157-C175. The chain crosses the membrane as a helical span at residues 202–224; the sequence is LYLIGIAAIVVAVIMIFEMILSM. E219 provides a ligand contact to cholesterol. Residues 225 to 236 lie on the Cytoplasmic side of the membrane; that stretch reads VLCCGIRNSSVY.

Belongs to the tetraspanin (TM4SF) family. As to quaternary structure, homodimer. Part of a complex composed of CD19, CR2/CD21, CD81 and IFITM1/CD225 in the membrane of mature B cells. Interacts (via the second extracellular domain) with CD19; this interaction is initiated early during biosynthesis in the ER and enables trafficking of only properly folded CD19. Part of a complex that includes MHC class II/HLA-DR molecules and IFITM1. Interacts with IFITM1. Interacts with IFITM2 and IFITM3. Part of integrin-tetraspanin complex composed of CD9, CD81, beta-1 and beta-2 integrins in the membrane of monocyte/macrophages. Interacts (via the second extracellular domain) with integrin ITGAV:ITGB3. Interacts with CD247/CD3 zeta, ICAM1 and CD9 at the immune synapse on T cell membrane. Part of a GPCR-tetraspanin complex consisting at least of ADGRG1, CD81, possibly CD9, and GNA11 in which CD81 enhances the association of ADGRG1 with GNA11. Part of a complex composed of CD9, CD81, PTGFRN and IGSF8. Interacts directly with IGSF8. Interacts with CD53 and SCIMP. Interacts with SAMHD1 (via its C-terminus). Interacts with glypican GPC3 and with the transcriptional repressor HHEX; binding to GPC3 decreases the availability of free CD81 for binding to HHEX, resulting in nuclear translocation of HHEX and transcriptional repression. Interacts with CLDN1. Interacts with CLDN6 and CLDN9. In terms of processing, not glycosylated. Likely constitutively palmitoylated at low levels. Protein palmitoylation is up-regulated upon coligation of BCR and CD9-C2R-CD81 complexes in lipid rafts. Expressed in oocytes (at protein level). Highly expressed in granulosa cells. Expressed in skeletal muscle mainly in endothelial cells of endomysial capillaries, in satellite cells and myoblasts (at protein level). Expressed in hepatocytes (at protein level).

It is found in the cell membrane. It localises to the basolateral cell membrane. In terms of biological role, structural component of specialized membrane microdomains known as tetraspanin-enriched microdomains (TERMs), which act as platforms for receptor clustering and signaling. Essential for trafficking and compartmentalization of CD19 receptor on the cell surface of activated B cells. Upon initial encounter with a microbial pathogen, enables the assembly of CD19-CR2 and B cell receptor complexes at signaling TERMs, lowering the threshold dose of antigen required to trigger B cell clonal expansion and humoral immune response. In T cells, associates with CD4 or CD8 coreceptors and defines the maturation state of antigen-induced synapses with B cells. Facilitates localization of CD3 in these immune synapses, required for costimulation and sustained activation of T cells, preferentially triggering T helper type 2 immune response. Can act both as positive and negative regulator of homotypic or heterotypic cell-cell fusion processes. In myoblasts, associates with another tetraspanin CD9 in complex with PTGFRN and inhibits myotube fusion during muscle regeneration. In macrophages, associates with CD9 and beta-1 and beta-2 integrins, and prevents macrophage fusion into multinucleated giant cells specialized in ingesting complement-opsonized large particles. Also prevents the fusion between mononuclear cell progenitors into osteoclasts in charge of bone resorption. Positively regulates sperm-egg fusion and may be involved in the acrosome reaction. Regulates protein trafficking in intracellular compartments. In T cells, associates with dNTPase SAMHD1 and defines its subcellular location, enabling its degradation by the proteasome and thereby controlling intracellular dNTP levels. Also regulates integrin-dependent migration of macrophages, particularly relevant for inflammatory response in the lung. Functionally, (Microbial infection) Specifically required for Plasmodium yoelii infectivity of hepatocytes, controlling sporozoite entry in hepatocytes via the parasitophorous vacuole and subsequent parasite differentiation to exoerythrocytic forms. The protein is CD81 antigen of Mus musculus (Mouse).